The sequence spans 232 residues: Putative caffeoyl-CoA O-methyltransferase At1g67980 (232 aa).

Lys-8 contributes to the substrate binding site. Residues Val-52, Glu-74, 76 to 77 (GV), Ser-82, and Asp-100 contribute to the S-adenosyl-L-methionine site. Residue Asp-149 coordinates substrate. Residue Asp-149 participates in a divalent metal cation binding. An S-adenosyl-L-methionine-binding site is contributed by Asp-151. A divalent metal cation-binding residues include Asp-175 and Asn-176.

This sequence belongs to the class I-like SAM-binding methyltransferase superfamily. Cation-dependent O-methyltransferase family. CCoAMT subfamily. A divalent metal cation is required as a cofactor.

It catalyses the reaction (E)-caffeoyl-CoA + S-adenosyl-L-methionine = (E)-feruloyl-CoA + S-adenosyl-L-homocysteine + H(+). It functions in the pathway aromatic compound metabolism; phenylpropanoid biosynthesis. Methylates caffeoyl-CoA to feruloyl-CoA and 5-hydroxyferuloyl-CoA to sinapoyl-CoA. Plays a role in the synthesis of feruloylated polysaccharides. Involved in the reinforcement of the plant cell wall. Also involved in the responding to wounding or pathogen challenge by the increased formation of cell wall-bound ferulic acid polymers. This chain is Putative caffeoyl-CoA O-methyltransferase At1g67980, found in Arabidopsis thaliana (Mouse-ear cress).